The following is a 610-amino-acid chain: UvrABC system protein C (610 aa).

Positions 16–94 (HQPGVYRMYN…IKQYLPKYNV (79 aa)) constitute a GIY-YIG domain. A UVR domain is found at 204–239 (NQVLELLVQKMEIASQQLKFEDAAKFRDQIQAIRRV).

Belongs to the UvrC family. In terms of assembly, interacts with UvrB in an incision complex.

The protein localises to the cytoplasm. In terms of biological role, the UvrABC repair system catalyzes the recognition and processing of DNA lesions. UvrC both incises the 5' and 3' sides of the lesion. The N-terminal half is responsible for the 3' incision and the C-terminal half is responsible for the 5' incision. The chain is UvrABC system protein C from Vibrio vulnificus (strain CMCP6).